The primary structure comprises 309 residues: Pantothenate synthetase (309 aa).

An N-acetylthreonine modification is found at T2. 40–47 is an ATP binding site; the sequence is MGALHEGH. Catalysis depends on H47, which acts as the Proton donor. Q72 serves as a coordination point for (R)-pantoate. Q72 contributes to the beta-alanine binding site. Mg(2+) is bound by residues D88, D89, and Q92. 158–161 contributes to the ATP binding site; it reads GEKD. Q164 is a binding site for (R)-pantoate. Residues V187 and 195-198 each bind ATP; that span reads MSSR.

Belongs to the pantothenate synthetase family.

The protein resides in the cytoplasm. It catalyses the reaction (R)-pantoate + beta-alanine + ATP = (R)-pantothenate + AMP + diphosphate + H(+). It participates in cofactor biosynthesis; (R)-pantothenate biosynthesis; (R)-pantothenate from (R)-pantoate and beta-alanine: step 1/1. With respect to regulation, pantothenate exhibits uncompetitive inhibition toward both D-pantoate and ATP, and non-competitive inhibition toward beta-alanine. AMPCPP exhibits competitive inhibition toward ATP, uncompetitive inhibition toward beta-alanine, and non-competitive inhibition toward D-pantoate. The enzyme is most active in the presence of magnesium or manganese. Other divalent cations (cobalt, nickel, zinc) are less effective. In terms of biological role, catalyzes the condensation of pantoate with beta-alanine in an ATP-dependent reaction via a pantoyl-adenylate intermediate. This chain is Pantothenate synthetase (panC), found in Mycobacterium tuberculosis (strain ATCC 25618 / H37Rv).